The chain runs to 275 residues: Bis(5'-nucleosyl)-tetraphosphatase, symmetrical (275 aa).

The protein belongs to the Ap4A hydrolase family.

The enzyme catalyses P(1),P(4)-bis(5'-adenosyl) tetraphosphate + H2O = 2 ADP + 2 H(+). Functionally, hydrolyzes diadenosine 5',5'''-P1,P4-tetraphosphate to yield ADP. The chain is Bis(5'-nucleosyl)-tetraphosphatase, symmetrical from Actinobacillus succinogenes (strain ATCC 55618 / DSM 22257 / CCUG 43843 / 130Z).